Reading from the N-terminus, the 124-residue chain is Fluoride-specific ion channel FluC (124 aa).

4 helical membrane-spanning segments follow: residues 4–24 (VLFV…ISLL), 35–55 (FGTL…FALG), 62–82 (PEIK…FSTF), and 95–115 (LVKA…VVYL). Residues Gly74 and Thr77 each coordinate Na(+).

The protein belongs to the fluoride channel Fluc/FEX (TC 1.A.43) family.

Its subcellular location is the cell inner membrane. The catalysed reaction is fluoride(in) = fluoride(out). With respect to regulation, na(+) is not transported, but it plays an essential structural role and its presence is essential for fluoride channel function. Fluoride-specific ion channel. Important for reducing fluoride concentration in the cell, thus reducing its toxicity. This is Fluoride-specific ion channel FluC from Shewanella halifaxensis (strain HAW-EB4).